Here is a 178-residue protein sequence, read N- to C-terminus: Cytochrome b6-f complex iron-sulfur subunit (178 aa).

The chain crosses the membrane as a helical span at residues 20 to 42 (LLTFGSVTGVALGALYPVVNYFI). The 97-residue stretch at 65-161 (ATGWLSSHPE…VSVENDNVFV (97 aa)) folds into the Rieske domain. [2Fe-2S] cluster is bound by residues cysteine 107, histidine 109, cysteine 125, and histidine 128. Cysteine 112 and cysteine 127 are joined by a disulfide.

The protein belongs to the Rieske iron-sulfur protein family. The 4 large subunits of the cytochrome b6-f complex are cytochrome b6, subunit IV (17 kDa polypeptide, PetD), cytochrome f and the Rieske protein, while the 4 small subunits are PetG, PetL, PetM and PetN. The complex functions as a dimer. Requires [2Fe-2S] cluster as cofactor.

The protein localises to the cellular thylakoid membrane. It catalyses the reaction 2 oxidized [plastocyanin] + a plastoquinol + 2 H(+)(in) = 2 reduced [plastocyanin] + a plastoquinone + 4 H(+)(out). Its function is as follows. Component of the cytochrome b6-f complex, which mediates electron transfer between photosystem II (PSII) and photosystem I (PSI), cyclic electron flow around PSI, and state transitions. This is Cytochrome b6-f complex iron-sulfur subunit from Parasynechococcus marenigrum (strain WH8102).